Reading from the N-terminus, the 128-residue chain is Large ribosomal subunit protein bL21 (128 aa).

Residues 104 to 128 form a disordered region; the sequence is GKTPTVGPRPKKEKVVEPAEGEGDH. The span at 116–128 shows a compositional bias: basic and acidic residues; it reads EKVVEPAEGEGDH.

Belongs to the bacterial ribosomal protein bL21 family. Part of the 50S ribosomal subunit. Contacts protein L20.

In terms of biological role, this protein binds to 23S rRNA in the presence of protein L20. The sequence is that of Large ribosomal subunit protein bL21 from Nitrobacter hamburgensis (strain DSM 10229 / NCIMB 13809 / X14).